The primary structure comprises 264 residues: Thymidylate synthase (264 aa).

Arg21 contributes to the dUMP binding site. His51 provides a ligand contact to (6R)-5,10-methylene-5,6,7,8-tetrahydrofolate. 126–127 (RR) serves as a coordination point for dUMP. Residue Cys146 is the Nucleophile of the active site. DUMP is bound by residues 166 to 169 (RSCD), Asn177, and 207 to 209 (HLY). (6R)-5,10-methylene-5,6,7,8-tetrahydrofolate is bound at residue Asp169. Ala263 lines the (6R)-5,10-methylene-5,6,7,8-tetrahydrofolate pocket.

It belongs to the thymidylate synthase family. Bacterial-type ThyA subfamily. In terms of assembly, homodimer.

Its subcellular location is the cytoplasm. The catalysed reaction is dUMP + (6R)-5,10-methylene-5,6,7,8-tetrahydrofolate = 7,8-dihydrofolate + dTMP. It participates in pyrimidine metabolism; dTTP biosynthesis. Functionally, catalyzes the reductive methylation of 2'-deoxyuridine-5'-monophosphate (dUMP) to 2'-deoxythymidine-5'-monophosphate (dTMP) while utilizing 5,10-methylenetetrahydrofolate (mTHF) as the methyl donor and reductant in the reaction, yielding dihydrofolate (DHF) as a by-product. This enzymatic reaction provides an intracellular de novo source of dTMP, an essential precursor for DNA biosynthesis. The polypeptide is Thymidylate synthase (Shewanella putrefaciens (strain CN-32 / ATCC BAA-453)).